The following is an 891-amino-acid chain: Dynein axonemal intermediate chain 3 (891 aa).

A compositionally biased stretch (basic residues) spans 1 to 16; sequence MAPKQKKKSSRRKKSP. The interval 1–27 is disordered; sequence MAPKQKKKSSRRKKSPKPILAASEDME. WD repeat units lie at residues 395-435, 477-533, 670-709, and 713-753; these read ESPD…DRIE, GHKR…PLTP, IHDG…GPLL, and CAPK…HEPA. Residues 817–861 are a coiled coil; it reads HLEYVEQRKKIREQEKKEMEQEMAKKKVKIYQKSKEQMEAELKMD.

As to quaternary structure, interacts with ACTR2; this interaction reduces binding of the Arp2/3 complex to the VCA domain of nucleation promoting factors. Part of the multisubunit axonemal dynein complex formed at least of two heavy chains and a number of intermediate and light chains. Found in a associated with the catalytic heavy chain DNAH2, the intermediate chain DNAI4, and the light chain DYNLT1.

The protein resides in the cytoplasm. Its function is as follows. Acts as a negative regulator of cell migration, invasion, and metastasis downstream of p53/TP53, through inhibition of Arp2/3 complex-mediated actin polymerization. Via its association with the multisubunit axonemal dynein complex, is potentially involved in the regulation of cilia function. May play a role in osteogenesis of dental tissue-derived mesenchymal stem cells. The chain is Dynein axonemal intermediate chain 3 (DNAI3) from Macaca fascicularis (Crab-eating macaque).